We begin with the raw amino-acid sequence, 612 residues long: E3 ubiquitin-protein ligase synoviolin (612 aa).

Topologically, residues 1–4 are cytoplasmic; the sequence is MFRT. Positions 1 to 251 are involved in FAM8A1 interaction; it reads MFRTAVMMAA…LFAIRPMYLA (251 aa). The helical transmembrane segment at 5–25 threads the bilayer; the sequence is AVMMAASLALTGAVVAHAYYL. Residues 21 to 42 form an interaction with SEL1L region; it reads HAYYLKHQFYPTVVYLTKSSPS. At 26-41 the chain is on the lumenal side; that stretch reads KHQFYPTVVYLTKSSP. A helical transmembrane segment spans residues 42–62; it reads SMAVLYIQAFVLVFLLGKVMG. Topologically, residues 63–98 are cytoplasmic; the sequence is KVFFGQLRAAEMEHLLERSWYAVTETCLAFTVFRDD. The helical transmembrane segment at 99–119 threads the bilayer; sequence FSPRFVALFTLLLFLKCFHWL. Residues 120-140 lie on the Lumenal side of the membrane; the sequence is AEDRVDFMERSPNISWLFHCR. The helical transmembrane segment at 141-161 threads the bilayer; it reads IVSLMFLLGILDFLFVSHAYH. The Cytoplasmic portion of the chain corresponds to 162 to 169; that stretch reads SILTRGAS. The helical transmembrane segment at 170–190 threads the bilayer; it reads VQLVFGFEYAILMTMVLTIFI. Residues 191-224 lie on the Lumenal side of the membrane; it reads KYVLHSVDLQSENPWDNKAVYMLYTELFTGFIKV. Residues 225–245 traverse the membrane as a helical segment; that stretch reads LLYMAFMTIMIKVHTFPLFAI. The segment at 236–270 is interaction with p53/TP53; it reads KVHTFPLFAIRPMYLAMRQFKKAVTDAIMSRRAIR. Residues 246-612 lie on the Cytoplasmic side of the membrane; the sequence is RPMYLAMRQF…LQKLESPVAH (367 aa). Zn(2+) contacts are provided by C291, C294, C307, H309, H312, C315, C326, and C329. The RING-type; atypical zinc finger occupies 291–330; the sequence is CIICREEMVTGAKRLPCNHIFHTSCLRSWFQRQQTCPTCR. Disordered regions lie at residues 337 to 375 and 393 to 449; these read SLPA…GLLP and PVPP…PGFP. Composition is skewed to pro residues over residues 341–375 and 393–409; these read QSPP…GLLP and PVPP…PPPT. A compositionally biased stretch (low complexity) spans 416 to 434; sequence PSGAATTTAAGTSTSAPAP. Residues 435 to 449 show a composition bias toward pro residues; sequence GSVPGPEAGPAPGFP. Residues 474-529 are HAF-H domain; necessary to form higher-order Hrd1 complexes; that stretch reads GFAGLTPEELRALEGHERQHLEARLQSLRNIHTLLDAAMLQINQYLTVLASLGPPR. A disordered region spans residues 530–612; that stretch reads PATSVNPTEE…LQKLESPVAH (83 aa). A compositionally biased stretch (low complexity) spans 539–559; that stretch reads ETASTVVSAAPSTSAPSSEAP. Over residues 560 to 570 the composition is skewed to pro residues; sequence TPSPGASPPIP. Acidic residues predominate over residues 586 to 595; the sequence is ELPEDGEPDA. S608 carries the post-translational modification Phosphoserine.

Belongs to the HRD1 family. As to quaternary structure, homodimer. Interacts with p53/TP53. Interacts with HTT. Component of the HRD1 complex, which comprises at least SYNV1/HRD1, DERL1/2, FAM8A1, HERPUD1/HERP, OS9, SEL1L and UBE2J1. FAM8A1 is stabilized by interaction with SYNV1, which prevents its proteasomal degradation. OS9 and UBE2J1 recruitment to the complex may be mediated by SEL1L. SYNV1 assembles with SEL1L and FAM8A1 through its transmembrane domains, but interaction with its cytoplasmic domain is required to confer stability to FAM8A1 and enhance recruitment of HERPUD1. The HRD1 complex also associates with VIMP and may transfer misfolded proteins from the endoplasmic reticulum to VCP. May form a complex with ERLEC1; HSPA5; OS9 and SEL1L. Interacts with VCP. Interacts with UBXN6. Interacts with BAG6. Interacts with NFE2L1. Interacts (via N-terminus) with components of the pre-B cell receptor, including IGLL1 and VPREB1A. Interacts with CREB3L3; this interaction leads to CREB3L3 ubiquitination and proteasomal degradation. Post-translationally, auto-ubiquitinated. Deubiquitinated by USP19. In terms of tissue distribution, widely expressed, with highest levels in bone, spleen, lung and testis. In the brain, present in neurons but not in glial cells. Up-regulated in synovial tissues from mice with collagen-induced arthritis (at protein level). Expressed in the liver.

It is found in the endoplasmic reticulum membrane. The catalysed reaction is S-ubiquitinyl-[E2 ubiquitin-conjugating enzyme]-L-cysteine + [acceptor protein]-L-lysine = [E2 ubiquitin-conjugating enzyme]-L-cysteine + N(6)-ubiquitinyl-[acceptor protein]-L-lysine.. It functions in the pathway protein modification; protein ubiquitination. Functionally, E3 ubiquitin-protein ligase which accepts ubiquitin specifically from endoplasmic reticulum-associated UBC7 E2 ligase and transfers it to substrates, promoting their degradation. Component of the endoplasmic reticulum quality control (ERQC) system also called ER-associated degradation (ERAD) involved in ubiquitin-dependent degradation of misfolded endoplasmic reticulum proteins. Also promotes the degradation of normal but naturally short-lived proteins such as SGK. Protects cells from ER stress-induced apoptosis. Sequesters p53/TP53 in the cytoplasm and promotes its degradation, thereby negatively regulating its biological function in transcription, cell cycle regulation and apoptosis. Required for embryogenesis. Mediates the ubiquitination and subsequent degradation of cytoplasmic NFE2L1. During the early stage of B cell development, required for degradation of the pre-B cell receptor (pre-BCR) complex, hence supporting further differentiation into mature B cells. This chain is E3 ubiquitin-protein ligase synoviolin (Syvn1), found in Mus musculus (Mouse).